The sequence spans 230 residues: MIMADLERIKIEPSWKEVLKEEFTKPYFDSIRESYLQAKSSGAILYPPAPLLFNAFNLTPFDQVKAVILGQDPYHAPHQAMGLCFSVPKGVALPASLRNVYKELERDLGIPPAKHGDLTSWAKQGVFMLNAILSVEQGKAGSHQKFGWQTFTDAAISALSRKKKGVVFLLWGNFAREKRVLIDSTKHTILESAHPSPLAGNRYFGNGHFSKTNEILKVQGEREILWRLPE.

Aspartate 72 functions as the Proton acceptor in the catalytic mechanism.

Belongs to the uracil-DNA glycosylase (UDG) superfamily. UNG family.

It is found in the cytoplasm. The catalysed reaction is Hydrolyzes single-stranded DNA or mismatched double-stranded DNA and polynucleotides, releasing free uracil.. Excises uracil residues from the DNA which can arise as a result of misincorporation of dUMP residues by DNA polymerase or due to deamination of cytosine. The polypeptide is Uracil-DNA glycosylase (Wolinella succinogenes (strain ATCC 29543 / DSM 1740 / CCUG 13145 / JCM 31913 / LMG 7466 / NCTC 11488 / FDC 602W) (Vibrio succinogenes)).